The following is a 314-amino-acid chain: Malate dehydrogenase (314 aa).

NAD(+) is bound by residues 11–16 and aspartate 35; that span reads GSGNIG. Arginine 84 and arginine 90 together coordinate substrate. Residues asparagine 97 and 120 to 122 each bind NAD(+); that span reads ITN. Asparagine 122 and arginine 153 together coordinate substrate. Histidine 177 functions as the Proton acceptor in the catalytic mechanism.

Belongs to the LDH/MDH superfamily. MDH type 3 family.

The catalysed reaction is (S)-malate + NAD(+) = oxaloacetate + NADH + H(+). In terms of biological role, catalyzes the reversible oxidation of malate to oxaloacetate. This is Malate dehydrogenase from Rickettsia africae (strain ESF-5).